Reading from the N-terminus, the 238-residue chain is Ubiquinone biosynthesis O-methyltransferase (238 aa).

The S-adenosyl-L-methionine site is built by arginine 40, glycine 59, aspartate 81, and methionine 126.

Belongs to the methyltransferase superfamily. UbiG/COQ3 family.

The enzyme catalyses a 3-demethylubiquinol + S-adenosyl-L-methionine = a ubiquinol + S-adenosyl-L-homocysteine + H(+). The catalysed reaction is a 3-(all-trans-polyprenyl)benzene-1,2-diol + S-adenosyl-L-methionine = a 2-methoxy-6-(all-trans-polyprenyl)phenol + S-adenosyl-L-homocysteine + H(+). It functions in the pathway cofactor biosynthesis; ubiquinone biosynthesis. Functionally, O-methyltransferase that catalyzes the 2 O-methylation steps in the ubiquinone biosynthetic pathway. The polypeptide is Ubiquinone biosynthesis O-methyltransferase (Neisseria meningitidis serogroup A / serotype 4A (strain DSM 15465 / Z2491)).